A 116-amino-acid chain; its full sequence is UPF0499 protein ATEG_06693 (116 aa).

Positions M1–A18 are cleaved as a signal peptide. Disulfide bonds link C32/C46, C36/C49, and C42/C54.

It belongs to the UPF0499 family.

The protein localises to the secreted. This Aspergillus terreus (strain NIH 2624 / FGSC A1156) protein is UPF0499 protein ATEG_06693.